The sequence spans 332 residues: Phosphoribosylformylglycinamidine cyclo-ligase (332 aa).

The protein belongs to the AIR synthase family.

The protein resides in the cytoplasm. It catalyses the reaction 2-formamido-N(1)-(5-O-phospho-beta-D-ribosyl)acetamidine + ATP = 5-amino-1-(5-phospho-beta-D-ribosyl)imidazole + ADP + phosphate + H(+). The protein operates within purine metabolism; IMP biosynthesis via de novo pathway; 5-amino-1-(5-phospho-D-ribosyl)imidazole from N(2)-formyl-N(1)-(5-phospho-D-ribosyl)glycinamide: step 2/2. The sequence is that of Phosphoribosylformylglycinamidine cyclo-ligase from Clostridium acetobutylicum (strain ATCC 824 / DSM 792 / JCM 1419 / IAM 19013 / LMG 5710 / NBRC 13948 / NRRL B-527 / VKM B-1787 / 2291 / W).